The chain runs to 1322 residues: Centrosome-associated protein Alms1a (1322 aa).

9 disordered regions span residues 1–26, 53–135, 165–193, 252–442, 464–614, 657–752, 814–844, 856–911, and 1083–1109; these read MRAK…ESSR, TASS…SEVT, SQSA…SVLK, EEPS…NSVY, KHNQ…GSRP, ESST…ASTD, SKSQ…KERP, AEAE…LNQR, and ASAT…SSMM. Residues 53–62 show a composition bias toward low complexity; sequence TASSGASGST. Basic and acidic residues predominate over residues 78–111; that stretch reads MEHESRPESGHRRRTKSSDHRSPDERGEAKEQLR. Over residues 165–189 the composition is skewed to polar residues; it reads SQSAEDIRTPTKSPQMQNKKTQTPE. The span at 279-292 shows a compositional bias: low complexity; the sequence is SLNSGMESSLSSNK. The span at 309-318 shows a compositional bias: polar residues; that stretch reads EVSSCQTDCR. Positions 319 to 330 are enriched in low complexity; it reads SSSQKESTQGSS. Residues 338 to 350 are compositionally biased toward polar residues; the sequence is NFTTEGTQCSYNR. Residues 354-364 are compositionally biased toward acidic residues; the sequence is EIDSIMEEEES. Basic and acidic residues-rich tracts occupy residues 365–375 and 394–408; these read IDRRKKDDLRI and SRRE…DDSR. Residues 409–430 show a composition bias toward low complexity; that stretch reads LNSPNSSRLGSEVSSRVESSRS. Basic and acidic residues-rich tracts occupy residues 464–487, 495–512, and 519–538; these read KHNQ…EQHQ, PKGR…REQQ, and RDQR…EREQ. Low complexity-rich tracts occupy residues 594–605 and 657–669; these read STGVTASTSTTS and ESST…SSSS. Polar residues predominate over residues 678–696; sequence GSLQQVAATNTNQSNARSS. The span at 714-735 shows a compositional bias: low complexity; that stretch reads AIGSSSPLPESVSYSGSTSGSG. Polar residues-rich tracts occupy residues 737–751 and 822–832; these read VITQ…NAST and TESATAAQIPS. Positions 893–907 are enriched in pro residues; that stretch reads LPAPPPTQPPPPPPH. The span at 1092–1107 shows a compositional bias: low complexity; that stretch reads SAITRSTTTTTNSSSS. The segment at 1115–1322 is interaction with Klp10A; sequence MSVPMGMMNT…ISLNHSMAIM (208 aa). The tract at residues 1190–1309 is ALMS motif; sequence SLQDQLQLAR…FNKRLKSRVA (120 aa).

Belongs to the ALMS1 family. As to quaternary structure, interacts (via C-terminus) with Klp10A. Interacts with SAK. In terms of tissue distribution, expressed in all germlines, including germline stem cells and spermatogonia.

The protein resides in the cytoplasm. Its subcellular location is the cytoskeleton. It is found in the microtubule organizing center. It localises to the centrosome. The protein localises to the centriole. In asymmetrically dividing germline stem cells (GSCs), plays a critical role in ensuring centrosome duplication, which is essential for the production of centrosomes and centrioles in all downstream germ cells. Might recruit SAK for daughter centriole duplication. In Drosophila melanogaster (Fruit fly), this protein is Centrosome-associated protein Alms1a.